A 216-amino-acid polypeptide reads, in one-letter code: Transmembrane protein 139 (216 aa).

The N-terminal stretch at M1 to G25 is a signal peptide. The Extracellular segment spans residues L26 to D34. A helical transmembrane segment spans residues I35 to L55. The Cytoplasmic segment spans residues V56–P216. Residues R104–L163 form a disordered region. Residues Q127–A145 are compositionally biased toward basic and acidic residues. A phosphoserine mark is found at S146 and S155.

Interacts with isoform 2 of SLC4A1.

The protein resides in the membrane. Functionally, may be involved in cellular trafficking of proteins such as SLC4A1. The chain is Transmembrane protein 139 (TMEM139) from Homo sapiens (Human).